We begin with the raw amino-acid sequence, 87 residues long: Acyl-CoA-binding protein 2 (87 aa).

Residues 2–87 enclose the ACB domain; that stretch reads VSQLFEEKAK…VDNLIAKYSS (86 aa). Residues 29 to 33, Lys-51, Lys-55, and Tyr-74 each bind an acyl-CoA; that span reads YGLYK.

This sequence belongs to the ACBP family.

Functionally, binds medium- and long-chain acyl-CoA esters with very high affinity and may function as an intracellular carrier of acyl-CoA esters. This is Acyl-CoA-binding protein 2 (ACB2) from Saccharomyces pastorianus (strain ATCC 76670 / Carlsberg bottom yeast no.2 / CBS 1503 / CLIB 180 / NBRC 10610 / NRRL Y-1525) (Saaz-type lager yeast).